Reading from the N-terminus, the 116-residue chain is Large ribosomal subunit protein uL18 (116 aa).

It belongs to the universal ribosomal protein uL18 family. As to quaternary structure, part of the 50S ribosomal subunit; part of the 5S rRNA/L5/L18/L25 subcomplex. Contacts the 5S and 23S rRNAs.

Its function is as follows. This is one of the proteins that bind and probably mediate the attachment of the 5S RNA into the large ribosomal subunit, where it forms part of the central protuberance. In Alcanivorax borkumensis (strain ATCC 700651 / DSM 11573 / NCIMB 13689 / SK2), this protein is Large ribosomal subunit protein uL18.